A 141-amino-acid polypeptide reads, in one-letter code: Large ribosomal subunit protein uL11A (141 aa).

Belongs to the universal ribosomal protein uL11 family. In terms of assembly, part of the ribosomal stalk of the 50S ribosomal subunit. Interacts with L10 and the large rRNA to form the base of the stalk. L10 forms an elongated spine to which L12 dimers bind in a sequential fashion forming a multimeric L10(L12)X complex. One or more lysine residues are methylated.

Functionally, forms part of the ribosomal stalk which helps the ribosome interact with GTP-bound translation factors. The sequence is that of Large ribosomal subunit protein uL11A from Bacillus cereus (strain ATCC 14579 / DSM 31 / CCUG 7414 / JCM 2152 / NBRC 15305 / NCIMB 9373 / NCTC 2599 / NRRL B-3711).